A 216-amino-acid polypeptide reads, in one-letter code: Protein Syd (216 aa).

Belongs to the Syd family.

The protein resides in the cell inner membrane. Interacts with the SecY protein in vivo. May bind preferentially to an uncomplexed state of SecY, thus functioning either as a chelating agent for excess SecY in the cell or as a regulatory factor that negatively controls the translocase function. This Shewanella baltica (strain OS195) protein is Protein Syd.